Here is a 674-residue protein sequence, read N- to C-terminus: tRNA-guanine(15) transglycosylase (674 aa).

The active-site Nucleophile is the aspartate 90. Aspartate 125 and alanine 192 together coordinate substrate. Residues cysteine 275, cysteine 277, and cysteine 280 each coordinate Zn(2+). Residues 596-671 (HNRVVVSEDS…QAIKTRKWKK (76 aa)) form the PUA domain.

This sequence belongs to the archaeosine tRNA-ribosyltransferase family. Zn(2+) is required as a cofactor.

The catalysed reaction is guanosine(15) in tRNA + 7-cyano-7-deazaguanine = 7-cyano-7-carbaguanosine(15) in tRNA + guanine. It functions in the pathway tRNA modification; archaeosine-tRNA biosynthesis. In terms of biological role, exchanges the guanine residue with 7-cyano-7-deazaguanine (preQ0) at position 15 in the dihydrouridine loop (D-loop) of archaeal tRNAs. The protein is tRNA-guanine(15) transglycosylase of Methanosphaera stadtmanae (strain ATCC 43021 / DSM 3091 / JCM 11832 / MCB-3).